Here is a 419-residue protein sequence, read N- to C-terminus: Tyrosine--tRNA ligase (419 aa).

Y34 contacts L-tyrosine. Positions 39-48 (PSGDSMHIGH) match the 'HIGH' region motif. L-tyrosine is bound by residues Y168 and Q172. The short motif at 230–234 (KFGKS) is the 'KMSKS' region element. K233 provides a ligand contact to ATP. The region spanning 352–418 (ANLVDWLVTL…GKKKYFLVSY (67 aa)) is the S4 RNA-binding domain.

This sequence belongs to the class-I aminoacyl-tRNA synthetase family. TyrS type 1 subfamily. Homodimer.

Its subcellular location is the cytoplasm. It carries out the reaction tRNA(Tyr) + L-tyrosine + ATP = L-tyrosyl-tRNA(Tyr) + AMP + diphosphate + H(+). Functionally, catalyzes the attachment of tyrosine to tRNA(Tyr) in a two-step reaction: tyrosine is first activated by ATP to form Tyr-AMP and then transferred to the acceptor end of tRNA(Tyr). In Listeria monocytogenes serovar 1/2a (strain ATCC BAA-679 / EGD-e), this protein is Tyrosine--tRNA ligase.